A 129-amino-acid chain; its full sequence is NADPH-dependent 7-cyano-7-deazaguanine reductase (129 aa).

Residue Cys42 is the Thioimide intermediate of the active site. Asp49 (proton donor) is an active-site residue. Substrate contacts are provided by residues 64-66 and 83-84; these read VEL and HE.

This sequence belongs to the GTP cyclohydrolase I family. QueF type 1 subfamily.

It localises to the cytoplasm. The enzyme catalyses 7-aminomethyl-7-carbaguanine + 2 NADP(+) = 7-cyano-7-deazaguanine + 2 NADPH + 3 H(+). It participates in tRNA modification; tRNA-queuosine biosynthesis. In terms of biological role, catalyzes the NADPH-dependent reduction of 7-cyano-7-deazaguanine (preQ0) to 7-aminomethyl-7-deazaguanine (preQ1). In Synechococcus sp. (strain CC9605), this protein is NADPH-dependent 7-cyano-7-deazaguanine reductase.